Consider the following 349-residue polypeptide: Ribosomal RNA large subunit methyltransferase M (349 aa).

Residues 216 to 219 (APGG), Asp235, Asp255, and Asp271 each bind S-adenosyl-L-methionine. The active-site Proton acceptor is the Lys300.

The protein belongs to the class I-like SAM-binding methyltransferase superfamily. RNA methyltransferase RlmE family. RlmM subfamily. Monomer.

Its subcellular location is the cytoplasm. It carries out the reaction cytidine(2498) in 23S rRNA + S-adenosyl-L-methionine = 2'-O-methylcytidine(2498) in 23S rRNA + S-adenosyl-L-homocysteine + H(+). Functionally, catalyzes the 2'-O-methylation at nucleotide C2498 in 23S rRNA. The sequence is that of Ribosomal RNA large subunit methyltransferase M from Saccharophagus degradans (strain 2-40 / ATCC 43961 / DSM 17024).